Here is a 192-residue protein sequence, read N- to C-terminus: Ion-translocating oxidoreductase complex subunit A (192 aa).

The next 6 membrane-spanning stretches (helical) occupy residues 5–25, 39–59, 63–83, 102–122, 134–154, and 171–191; these read ILLIISTALINNFVLVKFLGL, IGMSLATMFVLTVASISAYLI, ILTPLSATFLRTLVFILVIAV, LLGIFLPLITTNCAVLGVALL, VIYGFGASLGFGLVLVLFAAL, and SIALITAGLMSLAFMGFTGLV.

Belongs to the NqrDE/RnfAE family. As to quaternary structure, the complex is composed of six subunits: RnfA, RnfB, RnfC, RnfD, RnfE and RnfG.

It is found in the cell inner membrane. Functionally, part of a membrane-bound complex that couples electron transfer with translocation of ions across the membrane. The chain is Ion-translocating oxidoreductase complex subunit A from Pasteurella multocida (strain Pm70).